We begin with the raw amino-acid sequence, 408 residues long: tRNA-specific 2-thiouridylase MnmA (408 aa).

ATP contacts are provided by residues 27–34 (AMSGGVDS) and Leu-53. The Nucleophile role is filled by Cys-121. The cysteines at positions 121 and 222 are disulfide-linked. Gly-145 serves as a coordination point for ATP. The interval 172–174 (RDQ) is interaction with tRNA. Cys-222 acts as the Cysteine persulfide intermediate in catalysis.

Belongs to the MnmA/TRMU family.

Its subcellular location is the cytoplasm. The enzyme catalyses S-sulfanyl-L-cysteinyl-[protein] + uridine(34) in tRNA + AH2 + ATP = 2-thiouridine(34) in tRNA + L-cysteinyl-[protein] + A + AMP + diphosphate + H(+). Catalyzes the 2-thiolation of uridine at the wobble position (U34) of tRNA, leading to the formation of s(2)U34. The polypeptide is tRNA-specific 2-thiouridylase MnmA (Rhizobium etli (strain ATCC 51251 / DSM 11541 / JCM 21823 / NBRC 15573 / CFN 42)).